The following is an 89-amino-acid chain: Small ribosomal subunit protein uS15 (89 aa).

A compositionally biased stretch (basic and acidic residues) spans 1–18; sequence MSLDTAEKQKLIENHQVH. The segment at 1-23 is disordered; it reads MSLDTAEKQKLIENHQVHPTDTG.

It belongs to the universal ribosomal protein uS15 family. Part of the 30S ribosomal subunit. Forms a bridge to the 50S subunit in the 70S ribosome, contacting the 23S rRNA.

In terms of biological role, one of the primary rRNA binding proteins, it binds directly to 16S rRNA where it helps nucleate assembly of the platform of the 30S subunit by binding and bridging several RNA helices of the 16S rRNA. Its function is as follows. Forms an intersubunit bridge (bridge B4) with the 23S rRNA of the 50S subunit in the ribosome. The chain is Small ribosomal subunit protein uS15 from Prochlorococcus marinus (strain AS9601).